Consider the following 264-residue polypeptide: S-adenosylmethionine decarboxylase proenzyme (264 aa).

The active-site Schiff-base intermediate with substrate; via pyruvic acid is Ser112. Residue Ser112 is modified to Pyruvic acid (Ser); by autocatalysis. Residue His117 is the Proton acceptor; for processing activity of the active site. The active-site Proton donor; for catalytic activity is Cys140.

This sequence belongs to the prokaryotic AdoMetDC family. Type 2 subfamily. Heterooctamer of four alpha and four beta chains arranged as a tetramer of alpha/beta heterodimers. It depends on pyruvate as a cofactor. Post-translationally, is synthesized initially as an inactive proenzyme. Formation of the active enzyme involves a self-maturation process in which the active site pyruvoyl group is generated from an internal serine residue via an autocatalytic post-translational modification. Two non-identical subunits are generated from the proenzyme in this reaction, and the pyruvate is formed at the N-terminus of the alpha chain, which is derived from the carboxyl end of the proenzyme. The post-translation cleavage follows an unusual pathway, termed non-hydrolytic serinolysis, in which the side chain hydroxyl group of the serine supplies its oxygen atom to form the C-terminus of the beta chain, while the remainder of the serine residue undergoes an oxidative deamination to produce ammonia and the pyruvoyl group blocking the N-terminus of the alpha chain.

It catalyses the reaction S-adenosyl-L-methionine + H(+) = S-adenosyl 3-(methylsulfanyl)propylamine + CO2. It participates in amine and polyamine biosynthesis; S-adenosylmethioninamine biosynthesis; S-adenosylmethioninamine from S-adenosyl-L-methionine: step 1/1. Catalyzes the decarboxylation of S-adenosylmethionine to S-adenosylmethioninamine (dcAdoMet), the propylamine donor required for the synthesis of the polyamines spermine and spermidine from the diamine putrescine. This is S-adenosylmethionine decarboxylase proenzyme from Yersinia pseudotuberculosis serotype O:1b (strain IP 31758).